Consider the following 206-residue polypeptide: Small ribosomal subunit protein uS4 (206 aa).

One can recognise an S4 RNA-binding domain in the interval 96-168 (SRLDNVVYRM…LELAEQREKP (73 aa)).

Belongs to the universal ribosomal protein uS4 family. As to quaternary structure, part of the 30S ribosomal subunit. Contacts protein S5. The interaction surface between S4 and S5 is involved in control of translational fidelity.

Functionally, one of the primary rRNA binding proteins, it binds directly to 16S rRNA where it nucleates assembly of the body of the 30S subunit. In terms of biological role, with S5 and S12 plays an important role in translational accuracy. The polypeptide is Small ribosomal subunit protein uS4 (Baumannia cicadellinicola subsp. Homalodisca coagulata).